Reading from the N-terminus, the 123-residue chain is UPF0231 protein plu3616 (123 aa).

Belongs to the UPF0231 family.

This is UPF0231 protein plu3616 from Photorhabdus laumondii subsp. laumondii (strain DSM 15139 / CIP 105565 / TT01) (Photorhabdus luminescens subsp. laumondii).